The following is a 272-amino-acid chain: Shikimate dehydrogenase (NADP(+)) (272 aa).

Shikimate is bound by residues 14 to 16 (SKS) and Thr-61. Catalysis depends on Lys-65, which acts as the Proton acceptor. Glu-77 provides a ligand contact to NADP(+). Shikimate contacts are provided by Asn-86 and Asp-102. Residues 126 to 130 (GAGGA), 149 to 154 (NRTVSR), and Met-213 each bind NADP(+). Position 215 (Tyr-215) interacts with shikimate. Position 237 (Gly-237) interacts with NADP(+).

The protein belongs to the shikimate dehydrogenase family. As to quaternary structure, homodimer.

It catalyses the reaction shikimate + NADP(+) = 3-dehydroshikimate + NADPH + H(+). Its pathway is metabolic intermediate biosynthesis; chorismate biosynthesis; chorismate from D-erythrose 4-phosphate and phosphoenolpyruvate: step 4/7. Functionally, involved in the biosynthesis of the chorismate, which leads to the biosynthesis of aromatic amino acids. Catalyzes the reversible NADPH linked reduction of 3-dehydroshikimate (DHSA) to yield shikimate (SA). The sequence is that of Shikimate dehydrogenase (NADP(+)) from Escherichia coli O81 (strain ED1a).